The following is a 55-amino-acid chain: ATP synthase F(0) complex subunit 8 (55 aa).

Residues 4–24 form a helical membrane-spanning segment; it reads LNPSPWLLILLFSWLIFLTML. A disordered region spans residues 36-55; it reads MPSTQNMCKQEPEPWTWPWA.

This sequence belongs to the ATPase protein 8 family. As to quaternary structure, component of the ATP synthase complex composed at least of ATP5F1A/subunit alpha, ATP5F1B/subunit beta, ATP5MC1/subunit c (homooctomer), MT-ATP6/subunit a, MT-ATP8/subunit 8, ATP5ME/subunit e, ATP5MF/subunit f, ATP5MG/subunit g, ATP5MK/subunit k, ATP5MJ/subunit j, ATP5F1C/subunit gamma, ATP5F1D/subunit delta, ATP5F1E/subunit epsilon, ATP5PF/subunit F6, ATP5PB/subunit b, ATP5PD/subunit d, ATP5PO/subunit OSCP. ATP synthase complex consists of a soluble F(1) head domain (subunits alpha(3) and beta(3)) - the catalytic core - and a membrane F(0) domain - the membrane proton channel (subunits c, a, 8, e, f, g, k and j). These two domains are linked by a central stalk (subunits gamma, delta, and epsilon) rotating inside the F1 region and a stationary peripheral stalk (subunits F6, b, d, and OSCP).

The protein resides in the mitochondrion membrane. Its function is as follows. Subunit 8, of the mitochondrial membrane ATP synthase complex (F(1)F(0) ATP synthase or Complex V) that produces ATP from ADP in the presence of a proton gradient across the membrane which is generated by electron transport complexes of the respiratory chain. ATP synthase complex consist of a soluble F(1) head domain - the catalytic core - and a membrane F(1) domain - the membrane proton channel. These two domains are linked by a central stalk rotating inside the F(1) region and a stationary peripheral stalk. During catalysis, ATP synthesis in the catalytic domain of F(1) is coupled via a rotary mechanism of the central stalk subunits to proton translocation. In vivo, can only synthesize ATP although its ATP hydrolase activity can be activated artificially in vitro. Part of the complex F(0) domain. The polypeptide is ATP synthase F(0) complex subunit 8 (Latimeria chalumnae (Coelacanth)).